The sequence spans 117 residues: Ribosome-binding factor A (117 aa).

It belongs to the RbfA family. In terms of assembly, monomer. Binds 30S ribosomal subunits, but not 50S ribosomal subunits or 70S ribosomes.

Its subcellular location is the cytoplasm. In terms of biological role, one of several proteins that assist in the late maturation steps of the functional core of the 30S ribosomal subunit. Associates with free 30S ribosomal subunits (but not with 30S subunits that are part of 70S ribosomes or polysomes). Required for efficient processing of 16S rRNA. May interact with the 5'-terminal helix region of 16S rRNA. This Blochmanniella floridana protein is Ribosome-binding factor A.